The following is a 171-amino-acid chain: Phosphopantetheine adenylyltransferase (171 aa).

Thr-9 contacts substrate. ATP-binding positions include 9-10 (TF) and His-17. Lys-41, Leu-73, and Arg-87 together coordinate substrate. Residues 88–90 (GLR), Glu-98, and 123–129 (YQFISGT) contribute to the ATP site.

It belongs to the bacterial CoaD family. In terms of assembly, homohexamer. Requires Mg(2+) as cofactor.

It is found in the cytoplasm. It catalyses the reaction (R)-4'-phosphopantetheine + ATP + H(+) = 3'-dephospho-CoA + diphosphate. The protein operates within cofactor biosynthesis; coenzyme A biosynthesis; CoA from (R)-pantothenate: step 4/5. Reversibly transfers an adenylyl group from ATP to 4'-phosphopantetheine, yielding dephospho-CoA (dPCoA) and pyrophosphate. The sequence is that of Phosphopantetheine adenylyltransferase from Paraburkholderia phytofirmans (strain DSM 17436 / LMG 22146 / PsJN) (Burkholderia phytofirmans).